The primary structure comprises 672 residues: MPKLEQRFDYVKIGLASPDRIRGWGERTLPNGTVVGEVTKPETINYRTLKPEMDGLFCERIFGPAKDWECHCGKYKRVRHRGIVCERCGVEVTESRVRRHRMGHIKLAAPVTHVWYLKGIPSYMAILLDMPLRDVEQIVYFNAYVVLEPGNHESLSYKQLLSEDVWLEIEDQIYSEDSEIVGVDVGIGAEALQVLLANLDLEVEAEKLREEIANSKGQKRAKLIKRLRVIDNFIATGSRPEWMVLDAIPVIPPDLRPMVQLDGGRFATSDLNDLYRRVINRNNRLARLQEILAPEIIIRNEKRMLQEAVDALIDNGRRGRTVVGANNRPLKSLSDIIEGKQGRFRQNLLGKRVDYSGRSVIVVGPKLAINQCGLPREMAIELFQPFVIHRLIRQGLVNNIKAAKKLIQKGDPNVWDVLEEVIDGHPVMLNRAPTLHRLGIQAFEPILVEGRAIQLHPLVCPAFNADFDGDQMAVHVPLSLESQAEARLLMLASNNVLSPATGRPIITPSQDMVLGCYYLTAENHKLQGSKALYFANPDDVILAYQQDKIDLHTYVYLRLAPDVEIETDKPEEIPPDIQQISDELVVHTYWMPLDSKVLPNTLGELKSEQKCENGDLVKAYNLYRIHYSQEGEIKKVYIKSRQVRQSNGLVTTQFVVTTPGRIIINQTIQSVL.

Zn(2+)-binding residues include cysteine 70, cysteine 72, cysteine 85, and cysteine 88. Mg(2+)-binding residues include aspartate 466, aspartate 468, and aspartate 470.

This sequence belongs to the RNA polymerase beta' chain family. RpoC1 subfamily. In terms of assembly, in cyanobacteria the RNAP catalytic core is composed of 2 alpha, 1 beta, 1 beta', 1 gamma and 1 omega subunit. When a sigma factor is associated with the core the holoenzyme is formed, which can initiate transcription. Mg(2+) is required as a cofactor. Zn(2+) serves as cofactor.

It catalyses the reaction RNA(n) + a ribonucleoside 5'-triphosphate = RNA(n+1) + diphosphate. DNA-dependent RNA polymerase catalyzes the transcription of DNA into RNA using the four ribonucleoside triphosphates as substrates. In Trichodesmium erythraeum (strain IMS101), this protein is DNA-directed RNA polymerase subunit gamma.